Here is a 1375-residue protein sequence, read N- to C-terminus: DNA-directed RNA polymerase subunit beta (1375 aa).

The protein belongs to the RNA polymerase beta chain family. As to quaternary structure, the RNAP catalytic core consists of 2 alpha, 1 beta, 1 beta' and 1 omega subunit. When a sigma factor is associated with the core the holoenzyme is formed, which can initiate transcription.

The enzyme catalyses RNA(n) + a ribonucleoside 5'-triphosphate = RNA(n+1) + diphosphate. Its function is as follows. DNA-dependent RNA polymerase catalyzes the transcription of DNA into RNA using the four ribonucleoside triphosphates as substrates. This Coxiella burnetii (strain Dugway 5J108-111) protein is DNA-directed RNA polymerase subunit beta.